Reading from the N-terminus, the 99-residue chain is MLERLKAITNLLKGALEQRSRAEEGYIREEKVKEAIELLEALERDIMEKELKLAKEALEKFDSNRKFYYLVGKLYVEVSKEEAQKLIEDELKMFGGEGK.

Positions 3-68 (ERLKAITNLL…EKFDSNRKFY (66 aa)) form a coiled coil.

This is an uncharacterized protein from Aquifex aeolicus (strain VF5).